The sequence spans 209 residues: Ribonuclease HII (209 aa).

The 192-residue stretch at 18–209 folds into the RNase H type-2 domain; it reads SLVAGVDEVG…FKPVKALLER (192 aa). The a divalent metal cation site is built by Asp24, Glu25, and Asp116.

The protein belongs to the RNase HII family. Mn(2+) serves as cofactor. Mg(2+) is required as a cofactor.

The protein resides in the cytoplasm. The catalysed reaction is Endonucleolytic cleavage to 5'-phosphomonoester.. Its function is as follows. Endonuclease that specifically degrades the RNA of RNA-DNA hybrids. This Shewanella oneidensis (strain ATCC 700550 / JCM 31522 / CIP 106686 / LMG 19005 / NCIMB 14063 / MR-1) protein is Ribonuclease HII.